We begin with the raw amino-acid sequence, 345 residues long: RING finger protein 228 (345 aa).

Residues 1-21 are compositionally biased toward low complexity; sequence MAAPASDSGGSQQSPSSSPGS. Positions 1-43 are disordered; it reads MAAPASDSGGSQQSPSSSPGSREGAGVAAKGAPDCGDAGARDA. An RING-type zinc finger spans residues 58-125; that stretch reads CKICYNYFDA…PGAIACPVCR (68 aa). The disordered stretch occupies residues 159–213; the sequence is LPQDRLPPLPARLPAPAAAPPPTPAPPPPPSPAPPQPPPPPPAEDAAPGPRARPG. Pro residues predominate over residues 163–201; the sequence is RLPPLPARLPAPAAAPPPTPAPPPPPSPAPPQPPPPPPA. The segment covering 202–213 has biased composition (low complexity); that stretch reads EDAAPGPRARPG. Transmembrane regions (helical) follow at residues 236–256 and 290–310; these read VCVV…LIFV and LSVA…ICWL. The tract at residues 319-345 is disordered; the sequence is AGSTGGSGGGGGPRARAAAGGARRSDT. Positions 321–331 are enriched in gly residues; sequence STGGSGGGGGP. Positions 332–345 are enriched in low complexity; sequence RARAAAGGARRSDT.

It is found in the membrane. This is RING finger protein 228 from Homo sapiens (Human).